A 336-amino-acid chain; its full sequence is Biotin synthase (336 aa).

Positions 54-281 (NAIQLSTLLS…KAMVRLSAGR (228 aa)) constitute a Radical SAM core domain. [4Fe-4S] cluster-binding residues include Cys69, Cys73, and Cys76. Residues Cys113, Cys144, Cys204, and Arg276 each contribute to the [2Fe-2S] cluster site.

This sequence belongs to the radical SAM superfamily. Biotin synthase family. Homodimer. [4Fe-4S] cluster serves as cofactor. The cofactor is [2Fe-2S] cluster.

It catalyses the reaction (4R,5S)-dethiobiotin + (sulfur carrier)-SH + 2 reduced [2Fe-2S]-[ferredoxin] + 2 S-adenosyl-L-methionine = (sulfur carrier)-H + biotin + 2 5'-deoxyadenosine + 2 L-methionine + 2 oxidized [2Fe-2S]-[ferredoxin]. Its pathway is cofactor biosynthesis; biotin biosynthesis; biotin from 7,8-diaminononanoate: step 2/2. Catalyzes the conversion of dethiobiotin (DTB) to biotin by the insertion of a sulfur atom into dethiobiotin via a radical-based mechanism. The protein is Biotin synthase of Burkholderia pseudomallei (strain 1106a).